The sequence spans 571 residues: Hemagglutinin-neuraminidase (571 aa).

Residues 1–26 (MDRAVGRVALENEEREAKNTWRFVFR) are Intravirion-facing. A helical transmembrane segment spans residues 27–47 (IAIFLLIVITLAISAAALVYS). Topologically, residues 48-571 (MEASTPGDLV…LVEILKEDGV (524 aa)) are virion surface. The N-linked (GlcNAc...) asparagine; by host glycan is linked to Asn119. An important for interaction with fusion/F protein region spans residues 124–152 (GAPVHDPDYIGGIGKELIVDDASDVTSFY). 3 cysteine pairs are disulfide-bonded: Cys172/Cys196, Cys186/Cys247, and Cys238/Cys251. Residues 234–239 (NRKSCS) form an involved in neuraminidase activity region. 2 N-linked (GlcNAc...) asparagine; by host glycosylation sites follow: Asn341 and Asn433. Intrachain disulfides connect Cys344/Cys461 and Cys455/Cys465. N-linked (GlcNAc...) asparagine; by host glycans are attached at residues Asn481, Asn508, and Asn538. Cys531 and Cys542 are oxidised to a cystine.

It belongs to the paramyxoviruses hemagglutinin-neuraminidase family. As to quaternary structure, homotetramer; composed of disulfide-linked homodimers. Interacts with F protein trimer. Interacts with host CG-1B; this interaction inhibits viral adsorption and replication rather than internalization.

The protein localises to the virion membrane. The protein resides in the host cell membrane. The enzyme catalyses Hydrolysis of alpha-(2-&gt;3)-, alpha-(2-&gt;6)-, alpha-(2-&gt;8)- glycosidic linkages of terminal sialic acid residues in oligosaccharides, glycoproteins, glycolipids, colominic acid and synthetic substrates.. In terms of biological role, mediates the viral entry into the host cell together with fusion/F protein. Attaches the virus to sialic acid-containing cell receptors and thereby initiates infection. Binding of HN protein to the receptor induces a conformational change that allows the F protein to trigger virion/cell membranes fusion. Functionally, neuraminidase activity ensures the efficient spread of the virus by dissociating the mature virions from the neuraminic acid containing glycoproteins. In Gallus gallus (Chicken), this protein is Hemagglutinin-neuraminidase (HN).